Reading from the N-terminus, the 41-residue chain is Large ribosomal subunit protein bL36 (41 aa).

It belongs to the bacterial ribosomal protein bL36 family.

In Bartonella bacilliformis (strain ATCC 35685 / KC583 / Herrer 020/F12,63), this protein is Large ribosomal subunit protein bL36.